We begin with the raw amino-acid sequence, 143 residues long: MAALVRGLMRRVAALPQAVRSVSGGGQRHEPYRPLPITSPLAGLPRNFRVREPPKPQKVDRWTEKRALFGVYDNVGILGGFQIHPKHLIMGPKWLRGWRGNELQRCIRKKQMVGDRMFMDDYHNLKKRIRFLYKRFNRTGKHR.

The transit peptide at 1–52 (MAALVRGLMRRVAALPQAVRSVSGGGQRHEPYRPLPITSPLAGLPRNFRVRE) directs the protein to the mitochondrion.

It belongs to the mitochondrion-specific ribosomal protein mL51 family. In terms of assembly, component of the mitochondrial ribosome large subunit (39S) which comprises a 16S rRNA and about 50 distinct proteins.

It localises to the mitochondrion. This is Large ribosomal subunit protein mL51 (MRPL51) from Gallus gallus (Chicken).